The chain runs to 390 residues: Methylthioribose-1-phosphate isomerase (390 aa).

Asp258 (proton donor) is an active-site residue.

It belongs to the eIF-2B alpha/beta/delta subunits family. MtnA subfamily.

It is found in the cytoplasm. The protein resides in the nucleus. It carries out the reaction 5-(methylsulfanyl)-alpha-D-ribose 1-phosphate = 5-(methylsulfanyl)-D-ribulose 1-phosphate. It participates in amino-acid biosynthesis; L-methionine biosynthesis via salvage pathway; L-methionine from S-methyl-5-thio-alpha-D-ribose 1-phosphate: step 1/6. In terms of biological role, catalyzes the interconversion of methylthioribose-1-phosphate (MTR-1-P) into methylthioribulose-1-phosphate (MTRu-1-P). This chain is Methylthioribose-1-phosphate isomerase, found in Coccidioides posadasii (strain C735) (Valley fever fungus).